Reading from the N-terminus, the 142-residue chain is Galactose-6-phosphate isomerase subunit LacA (142 aa).

It belongs to the LacAB/RpiB family. Heteromultimeric protein consisting of LacA and LacB.

It carries out the reaction aldehydo-D-galactose 6-phosphate = keto-D-tagatose 6-phosphate. It functions in the pathway carbohydrate metabolism; D-galactose 6-phosphate degradation; D-tagatose 6-phosphate from D-galactose 6-phosphate: step 1/1. The polypeptide is Galactose-6-phosphate isomerase subunit LacA (Staphylococcus haemolyticus (strain JCSC1435)).